We begin with the raw amino-acid sequence, 267 residues long: MADS-box transcription factor 15 (267 aa).

An MADS-box domain is found at 1–61 (MGRGKVQLKR…GKLYEYATDS (61 aa)). One can recognise a K-box domain in the interval 88 to 178 (EGNWCHEYRK…QKELVERQKN (91 aa)). The segment at 179 to 215 (VRGQQQVGQWDQTQVQAQAQAQPQAQTSSSSSSMLRD) is disordered. A compositionally biased stretch (low complexity) spans 182–215 (QQQVGQWDQTQVQAQAQAQPQAQTSSSSSSMLRD).

As to quaternary structure, may interact with the K-box of MADS1 and MADS6.

The protein localises to the nucleus. Functionally, probable transcription factor. The protein is MADS-box transcription factor 15 (MADS15) of Oryza sativa subsp. japonica (Rice).